The chain runs to 601 residues: Vesicular glutamate transporter 3 (601 aa).

The Cytoplasmic segment spans residues methionine 1–tyrosine 89. The helical transmembrane segment at isoleucine 90–glycine 110 threads the bilayer. The Vesicular portion of the chain corresponds to valine 111–glycine 143. N-linked (GlcNAc...) asparagine glycosylation occurs at asparagine 119. Residues leucine 144 to serine 164 form a helical membrane-spanning segment. At asparagine 165–lysine 166 the chain is on the cytoplasmic side. The helical transmembrane segment at phenylalanine 167–isoleucine 187 threads the bilayer. Over proline 188–tyrosine 195 the chain is Vesicular. Residues glycine 196 to cysteine 216 form a helical membrane-spanning segment. Over histidine 217–threonine 234 the chain is Cytoplasmic. A helical membrane pass occupies residues threonine 235–valine 255. Residues glutamine 256 to serine 262 are Vesicular-facing. The chain crosses the membrane as a helical span at residues valine 263–tyrosine 283. The Cytoplasmic segment spans residues glutamate 284–leucine 327. A helical transmembrane segment spans residues proline 328–isoleucine 348. The Vesicular portion of the chain corresponds to serine 349–glycine 366. A helical membrane pass occupies residues leucine 367 to alanine 387. The Cytoplasmic portion of the chain corresponds to aspartate 388 to lysine 403. The chain crosses the membrane as a helical span at residues isoleucine 404–histidine 424. Topologically, residues threonine 425–lysine 426 are vesicular. The helical transmembrane segment at glycine 427 to phenylalanine 447 threads the bilayer. Topologically, residues asparagine 448–serine 460 are cytoplasmic. Residues isoleucine 461 to valine 481 form a helical membrane-spanning segment. Residues glycine 482–glutamine 494 lie on the Vesicular side of the membrane. A helical transmembrane segment spans residues asparagine 495 to alanine 515. Topologically, residues serine 516–serine 598 are cytoplasmic. The interval arginine 576–serine 601 is disordered.

Belongs to the major facilitator superfamily. Sodium/anion cotransporter family. VGLUT subfamily. Expressed in restricted areas of the brain. Highest expression is found in the neurons of the basal forebrain, the hippocampal formation, and the majority of the neurons of the mesencephalic raphe nuclei. Expressed in inner hair cells of the ear.

It localises to the cytoplasmic vesicle. The protein resides in the secretory vesicle. The protein localises to the synaptic vesicle membrane. It is found in the cell membrane. Its subcellular location is the synapse. It localises to the synaptosome. The catalysed reaction is L-glutamate(out) = L-glutamate(in). The enzyme catalyses 3 Na(+)(out) + phosphate(out) = 3 Na(+)(in) + phosphate(in). It carries out the reaction chloride(in) = chloride(out). With respect to regulation, the L-glutamate uniporter activity exhibits a biphasic dependence on chloride concentration. Chloride channel activity is allosterically activated by lumenal H(+) and Cl(-) leading to synaptic vesicles acidification. The L-glutamate transport activity is allosterically activated by lumenal H(+) and Cl(-), preventing non-vesicular L-glutamate release. In terms of biological role, multifunctional transporter that transports L-glutamate as well as multiple ions such as chloride, sodium and phosphate. At the synaptic vesicle membrane, mainly functions as an uniporter that mediates the uptake of L-glutamate into synaptic vesicles at presynaptic nerve terminals of excitatory neural cells. The L-glutamate uniporter activity is electrogenic and is driven by the proton electrochemical gradient, mainly by the electrical gradient established by the vacuolar H(+)-ATPase across the synaptic vesicle membrane. In addition, functions as a chloride channel that allows a chloride permeation through the synaptic vesicle membrane that affects the proton electrochemical gradient and promotes synaptic vesicles acidification. At the plasma membrane, following exocytosis, functions as a symporter of Na(+) and phosphate from the extracellular space to the cytoplasm allowing synaptic phosphate homeostasis regulation. The symporter activity is electrogenic. Moreover, operates synergistically with SLC18A3/VACHT under a constant H(+) gradient, thereby allowing striatal vesicular acetylcholine uptake. The protein is Vesicular glutamate transporter 3 of Mus musculus (Mouse).